Here is a 295-residue protein sequence, read N- to C-terminus: GTPase Era (295 aa).

The 168-residue stretch at 4-171 (KSGFVTIIGR…INLIVQYLPE (168 aa)) folds into the Era-type G domain. The tract at residues 12-19 (GRPNVGKS) is G1. 12–19 (GRPNVGKS) lines the GTP pocket. Residues 38–42 (QTTRN) are G2. Positions 59–62 (DTPG) are G3. Residues 59-63 (DTPGI) and 121-124 (NKID) contribute to the GTP site. The G4 stretch occupies residues 121–124 (NKID). The G5 stretch occupies residues 150–152 (ISA). The region spanning 194-280 (IREKILHYTD…YLELWVKVKE (87 aa)) is the KH type-2 domain.

Belongs to the TRAFAC class TrmE-Era-EngA-EngB-Septin-like GTPase superfamily. Era GTPase family. In terms of assembly, monomer.

It is found in the cytoplasm. It localises to the cell membrane. Functionally, an essential GTPase that binds both GDP and GTP, with rapid nucleotide exchange. Plays a role in 16S rRNA processing and 30S ribosomal subunit biogenesis and possibly also in cell cycle regulation and energy metabolism. This Alkaliphilus oremlandii (strain OhILAs) (Clostridium oremlandii (strain OhILAs)) protein is GTPase Era.